The primary structure comprises 176 residues: 4-hydroxylaminobenzoate lyase (176 aa).

The protein belongs to the PnbB family.

It carries out the reaction 4-hydroxylaminobenzoate + H2O + H(+) = 3,4-dihydroxybenzoate + NH4(+). Lyase involved in the degradation of nitroaromatic compounds. Catalyzes the conversion of 4-hydroxylaminobenzoate to 3,4-dihydroxybenzoate (protocatechuate). Required for the catabolism of 4-nitrotoluene. The chain is 4-hydroxylaminobenzoate lyase from Pseudomonas putida (Arthrobacter siderocapsulatus).